A 432-amino-acid polypeptide reads, in one-letter code: Amino-acid acetyltransferase (432 aa).

The N-acetyltransferase domain maps to 286–425 (ELVREAAIED…ASLYNFQRNS (140 aa)).

The protein belongs to the acetyltransferase family. ArgA subfamily.

Its subcellular location is the cytoplasm. It catalyses the reaction L-glutamate + acetyl-CoA = N-acetyl-L-glutamate + CoA + H(+). Its pathway is amino-acid biosynthesis; L-arginine biosynthesis; N(2)-acetyl-L-ornithine from L-glutamate: step 1/4. The sequence is that of Amino-acid acetyltransferase from Pseudomonas syringae pv. tomato (strain ATCC BAA-871 / DC3000).